Reading from the N-terminus, the 200-residue chain is GTP cyclohydrolase-2 (200 aa).

50–54 (RIHSE) provides a ligand contact to GTP. Positions 55, 66, and 68 each coordinate Zn(2+). Residues Gln-71, 93-95 (EGR), and Thr-115 contribute to the GTP site. The active-site Proton acceptor is the Asp-127. Arg-129 (nucleophile) is an active-site residue. The GTP site is built by Thr-150 and Lys-155.

This sequence belongs to the GTP cyclohydrolase II family. Requires Zn(2+) as cofactor.

It carries out the reaction GTP + 4 H2O = 2,5-diamino-6-hydroxy-4-(5-phosphoribosylamino)-pyrimidine + formate + 2 phosphate + 3 H(+). The protein operates within cofactor biosynthesis; riboflavin biosynthesis; 5-amino-6-(D-ribitylamino)uracil from GTP: step 1/4. Its function is as follows. Catalyzes the conversion of GTP to 2,5-diamino-6-ribosylamino-4(3H)-pyrimidinone 5'-phosphate (DARP), formate and pyrophosphate. The polypeptide is GTP cyclohydrolase-2 (Acinetobacter baylyi (strain ATCC 33305 / BD413 / ADP1)).